The primary structure comprises 346 residues: Ribosomal RNA small subunit methyltransferase H (346 aa).

S-adenosyl-L-methionine-binding positions include glycine 53–tyrosine 55, aspartate 70, phenylalanine 97, aspartate 114, and glutamine 121.

It belongs to the methyltransferase superfamily. RsmH family.

Its subcellular location is the cytoplasm. It carries out the reaction cytidine(1402) in 16S rRNA + S-adenosyl-L-methionine = N(4)-methylcytidine(1402) in 16S rRNA + S-adenosyl-L-homocysteine + H(+). Specifically methylates the N4 position of cytidine in position 1402 (C1402) of 16S rRNA. The polypeptide is Ribosomal RNA small subunit methyltransferase H (Bartonella henselae (strain ATCC 49882 / DSM 28221 / CCUG 30454 / Houston 1) (Rochalimaea henselae)).